A 461-amino-acid chain; its full sequence is Cysteine--tRNA ligase (461 aa).

Cys-28 lines the Zn(2+) pocket. A 'HIGH' region motif is present at residues 30 to 40; that stretch reads ITVYDLCHIGH. Zn(2+)-binding residues include Cys-209, His-234, and Glu-238. The 'KMSKS' region motif lies at 266–270; the sequence is KMSKS. Residue Lys-269 coordinates ATP.

This sequence belongs to the class-I aminoacyl-tRNA synthetase family. In terms of assembly, monomer. It depends on Zn(2+) as a cofactor.

The protein localises to the cytoplasm. The enzyme catalyses tRNA(Cys) + L-cysteine + ATP = L-cysteinyl-tRNA(Cys) + AMP + diphosphate. The polypeptide is Cysteine--tRNA ligase (Salmonella arizonae (strain ATCC BAA-731 / CDC346-86 / RSK2980)).